The following is a 489-amino-acid chain: Tandem C2 domains nuclear protein (489 aa).

5 positions are modified to phosphoserine: Ser-82, Ser-155, Ser-167, Ser-173, and Ser-210. A disordered region spans residues 189 to 214 (DSFSSVPSSSSSRKNSQGSNRSLDTI). The segment covering 191-210 (FSSVPSSSSSRKNSQGSNRS) has biased composition (low complexity). Phosphothreonine occurs at positions 213 and 215. At Ser-217 the chain carries Phosphoserine. C2 domains are found at residues 222-341 (DLGR…SLEI) and 343-470 (APSK…NQWK). The Nuclear localization signal motif lies at 446 to 448 (RRK).

Its subcellular location is the nucleus. In Mus musculus (Mouse), this protein is Tandem C2 domains nuclear protein (Tc2n).